Reading from the N-terminus, the 64-residue chain is Small, acid-soluble spore protein H (64 aa).

This sequence belongs to the SspH family.

It localises to the spore core. In Acetivibrio thermocellus (strain ATCC 27405 / DSM 1237 / JCM 9322 / NBRC 103400 / NCIMB 10682 / NRRL B-4536 / VPI 7372) (Clostridium thermocellum), this protein is Small, acid-soluble spore protein H.